A 487-amino-acid chain; its full sequence is Cysteine--tRNA ligase (487 aa).

Zn(2+) is bound at residue C30. A 'HIGH' region motif is present at residues 32 to 42 (PTVYGHAHLGH). Residues C226, H251, and E255 each coordinate Zn(2+). Residues 283–287 (KMGKS) carry the 'KMSKS' region motif. K286 is an ATP binding site.

Belongs to the class-I aminoacyl-tRNA synthetase family. Monomer. Requires Zn(2+) as cofactor.

It localises to the cytoplasm. The enzyme catalyses tRNA(Cys) + L-cysteine + ATP = L-cysteinyl-tRNA(Cys) + AMP + diphosphate. In Chlorobaculum tepidum (strain ATCC 49652 / DSM 12025 / NBRC 103806 / TLS) (Chlorobium tepidum), this protein is Cysteine--tRNA ligase (cysS).